Reading from the N-terminus, the 64-residue chain is MPKIKSNSGAAKRFKKTAHGFKHKQSFRSHILTKKSTKRKRQLRGMKQIHDADKQLIQRMLPNL.

The disordered stretch occupies residues 1–54 (MPKIKSNSGAAKRFKKTAHGFKHKQSFRSHILTKKSTKRKRQLRGMKQIHDADK). Over residues 12-44 (KRFKKTAHGFKHKQSFRSHILTKKSTKRKRQLR) the composition is skewed to basic residues.

It belongs to the bacterial ribosomal protein bL35 family.

This chain is Large ribosomal subunit protein bL35, found in Chromohalobacter salexigens (strain ATCC BAA-138 / DSM 3043 / CIP 106854 / NCIMB 13768 / 1H11).